The sequence spans 212 residues: Thymidylate kinase (212 aa).

11–18 (GLEGAGKT) provides a ligand contact to ATP.

It belongs to the thymidylate kinase family.

It catalyses the reaction dTMP + ATP = dTDP + ADP. Its function is as follows. Phosphorylation of dTMP to form dTDP in both de novo and salvage pathways of dTTP synthesis. The chain is Thymidylate kinase (tmk) from Buchnera aphidicola subsp. Acyrthosiphon pisum (strain APS) (Acyrthosiphon pisum symbiotic bacterium).